Consider the following 492-residue polypeptide: UPF0236 protein TTE1650/TTE2708 (492 aa).

This sequence belongs to the UPF0236 family.

The polypeptide is UPF0236 protein TTE1650/TTE2708 (Caldanaerobacter subterraneus subsp. tengcongensis (strain DSM 15242 / JCM 11007 / NBRC 100824 / MB4) (Thermoanaerobacter tengcongensis)).